We begin with the raw amino-acid sequence, 347 residues long: MDENRKKALGAALGQIERQFGKGAVMRMGDARAVRGDVEVISTGSLQLDIALGVGGLPKGRVVEIYGPESSGKTTLTLHAIAEAQKAGGTAAFVDAEHALDPDYAEKLGVNLDDLLVSQPDTGEQALEITDMLVRSGAVDVVVVDSVAALTPKAEIEGEMGDSHVGLQARLMSQALRKLTANIKRSNTLVIFINQIRMKIGVMFGSPETTTGGNALKFYSSVRMDIRRLGAIKKGDEVLGNETRVKVVKNKMAPPFKQAEFEILYGQGISHEGELIDLGVKEGLIEKAGAWYSHNGDRIGQGKDNVRNYLKEHPELAAELEKQIRDKLLPGRAPSSEAQGTESGQEA.

67-74 (GPESSGKT) contacts ATP. The tract at residues 326-347 (DKLLPGRAPSSEAQGTESGQEA) is disordered. Residues 336–347 (SEAQGTESGQEA) are compositionally biased toward polar residues.

Belongs to the RecA family.

It localises to the cytoplasm. Functionally, can catalyze the hydrolysis of ATP in the presence of single-stranded DNA, the ATP-dependent uptake of single-stranded DNA by duplex DNA, and the ATP-dependent hybridization of homologous single-stranded DNAs. It interacts with LexA causing its activation and leading to its autocatalytic cleavage. The protein is Protein RecA of Alkalilimnicola ehrlichii (strain ATCC BAA-1101 / DSM 17681 / MLHE-1).